A 97-amino-acid polypeptide reads, in one-letter code: MLKMNLANLQLFAHKKGGGSTSNGRDSQAKRLGAKAADGQTVTGGSILYRQRGTHIHAGVNVGRGGDDTLFAKVEGVVRFERKGRDKKQVSVYPIAK.

The segment at 14 to 36 is disordered; that stretch reads HKKGGGSTSNGRDSQAKRLGAKA.

It belongs to the bacterial ribosomal protein bL27 family.

In Streptococcus sanguinis (strain SK36), this protein is Large ribosomal subunit protein bL27.